Here is a 910-residue protein sequence, read N- to C-terminus: DNA mismatch repair protein MutS (910 aa).

658-665 (GPNMGGKS) serves as a coordination point for ATP.

This sequence belongs to the DNA mismatch repair MutS family.

In terms of biological role, this protein is involved in the repair of mismatches in DNA. It is possible that it carries out the mismatch recognition step. This protein has a weak ATPase activity. This chain is DNA mismatch repair protein MutS, found in Brucella anthropi (strain ATCC 49188 / DSM 6882 / CCUG 24695 / JCM 21032 / LMG 3331 / NBRC 15819 / NCTC 12168 / Alc 37) (Ochrobactrum anthropi).